The primary structure comprises 487 residues: Serine/threonine-protein kinase 4 (487 aa).

An N-acetylmethionine modification is found at methionine 1. Threonine 3 is subject to Phosphothreonine. Residues 30-281 enclose the Protein kinase domain; the sequence is FDVLEKLGEG…ATQLLQHPFV (252 aa). Residues 36–44 and lysine 59 contribute to the ATP site; that span reads LGEGSYGSV. Aspartate 149 functions as the Proton acceptor in the catalytic mechanism. The residue at position 183 (threonine 183) is a Phosphothreonine; by autocatalysis. Residue serine 265 is modified to Phosphoserine. Positions 290-310 form a coiled coil; sequence LRDLINEAMDVKLKRQEAQQR. The tract at residues 305–337 is disordered; sequence QEAQQREVDQDDEENSEEDELDSGTMVRAVGDE. Over residues 313–326 the composition is skewed to acidic residues; sequence DQDDEENSEEDELD. Phosphoserine is present on serine 320. 2 positions are modified to phosphothreonine: threonine 340 and threonine 367. Threonine 387 bears the Phosphothreonine; by PKB/AKT1 mark. A phosphoserine mark is found at serine 410 and serine 414. Tyrosine 433 is subject to Phosphotyrosine. One can recognise an SARAH domain in the interval 433–480; that stretch reads YEFLKSWTVEDLQKRLLALDPMMEQEIEEIRQKYQSKRQPILDAIEAK.

This sequence belongs to the protein kinase superfamily. STE Ser/Thr protein kinase family. STE20 subfamily. Homodimer; mediated via the coiled-coil region. Interacts with NORE1, which inhibits autoactivation. Interacts with and stabilizes SAV1. Interacts with RASSF1. Interacts with FOXO3. Interacts with RASSF2 (via SARAH domain). Interacts with AR, PKB/AKT1, TNNI3 and SIRT1. Interacts with DLG5 (via PDZ domain 3). Interacts with MARK3 and SCRIB in the presence of DLG5. Mg(2+) is required as a cofactor. Autophosphorylated on serine and threonine residues. Phosphorylation at Thr-387 by PKB/AKT1, leads to inhibition of its: kinase activity, nuclear translocation and autophosphorylation at Thr-183. It also diminishes its cleavage by caspases and its ability to phosphorylate FOXO3. In terms of processing, proteolytically cleaved by caspase-3 during apoptosis at Asp-326 and Asp-349 resulting in a 37 kDa or a 39 kDa subunit respectively. The 39 kDa subunit is further cleaved into the 37 kDa form. Proteolytic cleavage results in kinase activation and nuclear translocation of the truncated form (MST1/N). It is less likely that cleavage at Asp-349 is a prerequisite for activation as this site is not conserved in the murine ortholog.

It localises to the cytoplasm. It is found in the nucleus. The catalysed reaction is L-seryl-[protein] + ATP = O-phospho-L-seryl-[protein] + ADP + H(+). It carries out the reaction L-threonyl-[protein] + ATP = O-phospho-L-threonyl-[protein] + ADP + H(+). Inhibited by the C-terminal non-catalytic region. Activated by caspase-cleavage. Full activation also requires homodimerization and autophosphorylation of Thr-183. Activated by RASSF1 which acts by preventing its dephosphorylation. In terms of biological role, stress-activated, pro-apoptotic kinase which, following caspase-cleavage, enters the nucleus and induces chromatin condensation followed by internucleosomal DNA fragmentation. Key component of the Hippo signaling pathway which plays a pivotal role in organ size control and tumor suppression by restricting proliferation and promoting apoptosis. The core of this pathway is composed of a kinase cascade wherein STK3/MST2 and STK4/MST1, in complex with its regulatory protein SAV1, phosphorylates and activates LATS1/2 in complex with its regulatory protein MOB1, which in turn phosphorylates and inactivates YAP1 oncoprotein and WWTR1/TAZ. Phosphorylation of YAP1 by LATS2 inhibits its translocation into the nucleus to regulate cellular genes important for cell proliferation, cell death, and cell migration. STK3/MST2 and STK4/MST1 are required to repress proliferation of mature hepatocytes, to prevent activation of facultative adult liver stem cells (oval cells), and to inhibit tumor formation. Phosphorylates 'Ser-14' of histone H2B (H2BS14ph) during apoptosis. Phosphorylates FOXO3 upon oxidative stress, which results in its nuclear translocation and cell death initiation. Phosphorylates MOBKL1A, MOBKL1B and RASSF2. Phosphorylates TNNI3 (cardiac Tn-I) and alters its binding affinity to TNNC1 (cardiac Tn-C) and TNNT2 (cardiac Tn-T). Phosphorylates FOXO1 on 'Ser-212' and regulates its activation and stimulates transcription of PMAIP1 in a FOXO1-dependent manner. Phosphorylates SIRT1 and inhibits SIRT1-mediated p53/TP53 deacetylation, thereby promoting p53/TP53 dependent transcription and apoptosis upon DNA damage. Acts as an inhibitor of PKB/AKT1. Phosphorylates AR on 'Ser-650' and suppresses its activity by intersecting with PKB/AKT1 signaling and antagonizing formation of AR-chromatin complexes. The chain is Serine/threonine-protein kinase 4 (STK4) from Otolemur garnettii (Small-eared galago).